Consider the following 148-residue polypeptide: Prefoldin subunit 2 (148 aa).

Residues 87–114 (KDGLEEVVRKLYETLEKKKKDLTEFEAK) adopt a coiled-coil conformation. A compositionally biased stretch (basic and acidic residues) spans 122–134 (QEDNKEGGNKKEG). The disordered stretch occupies residues 122-148 (QEDNKEGGNKKEGNAQGVLVGAASSSQ).

Belongs to the prefoldin subunit beta family. As to quaternary structure, heterohexamer of two PFD-alpha type and four PFD-beta type subunits forming prefoldin co-chaperone complex. Interacts with LSM8, a specific subunit of the LSM2-8 complex, which is a core component of the spliceosome.

It is found in the cytoplasm. The protein resides in the nucleus. Binds specifically to cytosolic chaperonin (c-CPN) and transfers target proteins to it. Binds to nascent polypeptide chain and promotes folding in an environment in which there are many competing pathways for nonnative proteins. Together with other chaperonins, contribute to the regulation of gene expression by modulating the spliceosome function on pre-mRNA splicing post-transcriptionally by acting as a co-chaperone of Hsp90 to control levels of LSM8. Required for microtubules (MTs) organization and dynamicity. Involved in the process leading to microtubules dissociation in response to gibberellic acid (GA) probably due to the DELLA proteins-mediated translocation of the prefoldin co-chaperone complex from the cytoplasm to the nucleus. The polypeptide is Prefoldin subunit 2 (Arabidopsis thaliana (Mouse-ear cress)).